Reading from the N-terminus, the 517-residue chain is Maturase K (517 aa).

The protein belongs to the intron maturase 2 family. MatK subfamily.

Its subcellular location is the plastid. The protein resides in the chloroplast. Its function is as follows. Usually encoded in the trnK tRNA gene intron. Probably assists in splicing its own and other chloroplast group II introns. This Phalaenopsis japonica (Orchid) protein is Maturase K.